Here is a 255-residue protein sequence, read N- to C-terminus: Gene 54 protein (255 aa).

This chain is Gene 54 protein (54), found in Mycobacterium phage D29 (Mycobacteriophage D29).